The sequence spans 452 residues: Pup--protein ligase (452 aa).

Glu9 provides a ligand contact to Mg(2+). Arg53 contributes to the ATP binding site. Tyr55 serves as a coordination point for Mg(2+). Asp57 serves as the catalytic Proton acceptor. Residue Glu63 coordinates Mg(2+). ATP-binding residues include Thr66 and Trp419.

This sequence belongs to the Pup ligase/Pup deamidase family. Pup-conjugating enzyme subfamily.

The enzyme catalyses ATP + [prokaryotic ubiquitin-like protein]-L-glutamate + [protein]-L-lysine = ADP + phosphate + N(6)-([prokaryotic ubiquitin-like protein]-gamma-L-glutamyl)-[protein]-L-lysine.. Its pathway is protein degradation; proteasomal Pup-dependent pathway. It functions in the pathway protein modification; protein pupylation. Its function is as follows. Catalyzes the covalent attachment of the prokaryotic ubiquitin-like protein modifier Pup to the proteasomal substrate proteins, thereby targeting them for proteasomal degradation. This tagging system is termed pupylation. The ligation reaction involves the side-chain carboxylate of the C-terminal glutamate of Pup and the side-chain amino group of a substrate lysine. The chain is Pup--protein ligase from Rhodococcus erythropolis (strain PR4 / NBRC 100887).